A 189-amino-acid polypeptide reads, in one-letter code: Interferon alpha-1 (189 aa).

Positions 1 to 23 (MAPAWSLLLALLLLSCNAICSLG) are cleaved as a signal peptide. Cystine bridges form between cysteine 24–cysteine 122 and cysteine 52–cysteine 162.

The protein belongs to the alpha/beta interferon family. In terms of assembly, interacts with CR2.

The protein localises to the secreted. Its function is as follows. Produced by macrophages, IFN-alpha have antiviral activities. Interferon stimulates the production of two enzymes: a protein kinase and an oligoadenylate synthetase. This is Interferon alpha-1 from Bos taurus (Bovine).